The following is a 155-amino-acid chain: Transcription antitermination protein NusB (155 aa).

This sequence belongs to the NusB family.

Its function is as follows. Involved in transcription antitermination. Required for transcription of ribosomal RNA (rRNA) genes. Binds specifically to the boxA antiterminator sequence of the ribosomal RNA (rrn) operons. In Vibrio vulnificus (strain CMCP6), this protein is Transcription antitermination protein NusB.